Reading from the N-terminus, the 204-residue chain is Inactive ribonuclease-like protein 9 (204 aa).

The N-terminal stretch at 1 to 26 (MMRTLITTHPLLLLLLLQQLLQPVQL) is a signal peptide. Cystine bridges form between Cys-97–Cys-152, Cys-115–Cys-167, and Cys-122–Cys-129. 2 N-linked (GlcNAc...) asparagine glycosylation sites follow: Asn-130 and Asn-142.

It belongs to the pancreatic ribonuclease family.

It is found in the secreted. Does not exhibit any ribonuclease activity. The polypeptide is Inactive ribonuclease-like protein 9 (RNASE9) (Chlorocebus aethiops (Green monkey)).